Here is a 154-residue protein sequence, read N- to C-terminus: Cathelicidin-2 (154 aa).

Positions 1–17 are cleaved as a signal peptide; that stretch reads MLSCWVLLLALLGGVCA. The propeptide occupies 18-122; it reads LPAPLSYPQA…RCRDASSDPV (105 aa). 2 disulfides stabilise this stretch: Cys-75–Cys-86 and Cys-97–Cys-114.

It belongs to the cathelicidin family. In terms of tissue distribution, detected in trachea, lung, proventriculus, duodenum, jejunum, ileum, caeca, colon, caecal tonsil, bursa of Fabricius, kidney, ovary, testis, thymus, liver, spleen, bone marrow, skin, uropygial gland, muscle and brain.

It localises to the secreted. Its function is as follows. Binds bacterial lipopolysaccharide (LPS). Has potent antimicrobial activity against Gram-positive and Gram-negative bacteria (in vitro). Has hemolytic activity (in vitro). May play a role in the innate immune response. The polypeptide is Cathelicidin-2 (CATHL2) (Gallus gallus (Chicken)).